Here is a 154-residue protein sequence, read N- to C-terminus: 3-hydroxyacyl-[acyl-carrier-protein] dehydratase FabZ (154 aa).

Histidine 55 is an active-site residue.

Belongs to the thioester dehydratase family. FabZ subfamily.

It localises to the cytoplasm. It catalyses the reaction a (3R)-hydroxyacyl-[ACP] = a (2E)-enoyl-[ACP] + H2O. In terms of biological role, involved in unsaturated fatty acids biosynthesis. Catalyzes the dehydration of short chain beta-hydroxyacyl-ACPs and long chain saturated and unsaturated beta-hydroxyacyl-ACPs. This chain is 3-hydroxyacyl-[acyl-carrier-protein] dehydratase FabZ, found in Oleidesulfovibrio alaskensis (strain ATCC BAA-1058 / DSM 17464 / G20) (Desulfovibrio alaskensis).